Here is a 208-residue protein sequence, read N- to C-terminus: Putative adhesin P1-like protein MPN_468 (208 aa).

2 disordered regions span residues 29–49 and 97–172; these read TNGS…VAPT and DSKT…NLTP. Positions 100-132 are enriched in low complexity; the sequence is TQNNTTTNENHTKFASATGSGQQQGSTTTTSAG. Residues 145–158 are compositionally biased toward polar residues; it reads SGNSISVQEATSGD. Over residues 159-172 the composition is skewed to low complexity; the sequence is NLTNYTNLPPNLTP.

It belongs to the adhesin P1 family.

This Mycoplasma pneumoniae (strain ATCC 29342 / M129 / Subtype 1) (Mycoplasmoides pneumoniae) protein is Putative adhesin P1-like protein MPN_468.